Consider the following 652-residue polypeptide: MSEKVIDVQDAWRDRALIDEAKYKEMYEASVSDPETFWGEHGKRIDWSTPFSKVKNTSFAPGDVSIKWFEDGRTNVALNCIDRHLATRGDQTAIIWEGDDPNESKHITYRQLHAEVCRMANVLRNRGVGKGDRVTLYLPMIPEAAYAMLACARLGAIHAIVFGGFSPDSLASRIKGCGSKLVITADEGLRGGRKVPLKANVDEAIKRLDKDLVDHVIVVKRTGGNVAMEPGRDVYYHEAAEQVTDECPAEAVEAEHPLFILYTSGSTGQPKGVVHTTGGYLVYASMTHQYVFDYHDGEVYWCTADVGWVTGHSYIVYGPLANGATTLMFEGIPTYPSNSRFWEVIDKHKVNIFYTAPTAIRSLMGGGEGPVKKTSRQSLRVLGSVGEPINPEAWDWYYRVVGDSRCPIVDTWWQTETGGILITPLPGATRLKPGSATLPFFGVQPVMVDAEGKILDGACEGNLCIKDSWPGQMRTVYGDHERFEQTYFSTYKDLYFTGDGARRDADGYYWITGRVDDVINVSGHRMGTAEVESSLVAHPKVSEAAVVGYPHNVKGQGIYAYVTLNEGEEGTDELRKELVTWVRKDIGPIASPDLLQFAPGLPKTRSGKIMRRILRKIAEDDFGSLGDTSTLAEPAVVDDLIENRQNRQNRSA.

CoA-binding positions include 190–193 and T310; that span reads RGGR. ATP is bound by residues 386-388, 410-415, D499, and R514; these read GEP and DTWWQT. S522 lines the CoA pocket. R525 is a binding site for ATP. The Mg(2+) site is built by V536, H538, and V541. CoA is bound at residue R583. K608 is modified (N6-acetyllysine).

This sequence belongs to the ATP-dependent AMP-binding enzyme family. Mg(2+) is required as a cofactor. Acetylated. Deacetylation by the SIR2-homolog deacetylase activates the enzyme.

The enzyme catalyses acetate + ATP + CoA = acetyl-CoA + AMP + diphosphate. Functionally, catalyzes the conversion of acetate into acetyl-CoA (AcCoA), an essential intermediate at the junction of anabolic and catabolic pathways. AcsA undergoes a two-step reaction. In the first half reaction, AcsA combines acetate with ATP to form acetyl-adenylate (AcAMP) intermediate. In the second half reaction, it can then transfer the acetyl group from AcAMP to the sulfhydryl group of CoA, forming the product AcCoA. The protein is Acetyl-coenzyme A synthetase of Methylorubrum extorquens (strain CM4 / NCIMB 13688) (Methylobacterium extorquens).